The following is a 298-amino-acid chain: 4-hydroxy-tetrahydrodipicolinate synthase (298 aa).

Threonine 51 is a pyruvate binding site. The active-site Proton donor/acceptor is tyrosine 139. Lysine 167 (schiff-base intermediate with substrate) is an active-site residue. Isoleucine 209 contributes to the pyruvate binding site.

This sequence belongs to the DapA family. Homotetramer; dimer of dimers.

Its subcellular location is the cytoplasm. The catalysed reaction is L-aspartate 4-semialdehyde + pyruvate = (2S,4S)-4-hydroxy-2,3,4,5-tetrahydrodipicolinate + H2O + H(+). It functions in the pathway amino-acid biosynthesis; L-lysine biosynthesis via DAP pathway; (S)-tetrahydrodipicolinate from L-aspartate: step 3/4. Catalyzes the condensation of (S)-aspartate-beta-semialdehyde [(S)-ASA] and pyruvate to 4-hydroxy-tetrahydrodipicolinate (HTPA). This is 4-hydroxy-tetrahydrodipicolinate synthase from Haemophilus influenzae (strain PittGG).